We begin with the raw amino-acid sequence, 109 residues long: Mitochondrial import receptor subunit TOM22 homolog (109 aa).

The Cytoplasmic portion of the chain corresponds to 1-60 (MALVRDDFDDIPDSEIHETIVERIEGLGEMFPDALRSAVHSTVDWSIWGVKGVFSLTKST). A helical transmembrane segment spans residues 61 to 77 (IWVVSTTSLIAFLPYII). Topologically, residues 78–109 (EKERSDLEKTQVAQQRQMLLGPSAAIQQAKTA) are mitochondrial intermembrane.

The protein belongs to the Tom22 family. As to quaternary structure, forms part of the preprotein translocase complex of the outer mitochondrial membrane (TOM complex).

Its subcellular location is the mitochondrion outer membrane. Its function is as follows. Central receptor component of the translocase of the outer membrane of mitochondria (TOM complex) responsible for the recognition and translocation of cytosolically synthesized mitochondrial preproteins. Together with the peripheral receptor tomm-20 functions as the transit peptide receptor and facilitates the movement of preproteins into the translocation pore. This is Mitochondrial import receptor subunit TOM22 homolog from Caenorhabditis elegans.